Reading from the N-terminus, the 261-residue chain is Claudin-18 (261 aa).

At 1 to 6 (MATTTC) the chain is on the cytoplasmic side. A helical membrane pass occupies residues 7–27 (QVVGLLLSLLGLAGCIAATGM). At 28 to 80 (DMWSTQDLYDNPVTSVFQYEGLWRSCVQQSSGFTECRPYFTILGLPAMLQAVR) the chain is on the extracellular side. A helical transmembrane segment spans residues 81–101 (ALMIVGIVLGVIGILVSIFAL). The Cytoplasmic segment spans residues 102-122 (KCIRIGSMDDSAKAKMTLTSG). A helical transmembrane segment spans residues 123–143 (IMFIISGVCAIIGVSVFANML). Residues 144-173 (VTNFWMSTANMYSGMGGMVQTVQTRYTFGA) lie on the Extracellular side of the membrane. A helical membrane pass occupies residues 174–194 (ALFVGWIAGGLTLIGGVMMCI). At 195–261 (ACRGLTPDDR…QSHPTKYDYV (67 aa)) the chain is on the cytoplasmic side. The required for role in regulation of RANKL-induced osteoclast differentiation stretch occupies residues 195-261 (ACRGLTPDDR…QSHPTKYDYV (67 aa)). Serine 214 carries the post-translational modification Phosphoserine. The disordered stretch occupies residues 242–261 (DGGARTEDDEQSHPTKYDYV).

This sequence belongs to the claudin family. As to quaternary structure, interacts with TJP2/ZO-2. Interacts with TJP1/ZO-1. Interacts with YAP1 (phosphorylated); the interaction sequesters YAP1 away from the nucleus and thereby restricts transcription of YAP1 target genes. Interacts with CLDN19. In terms of tissue distribution, expressed in the lung (at protein level).

The protein localises to the cell junction. It is found in the tight junction. It localises to the cell membrane. Its function is as follows. Involved in alveolar fluid homeostasis via regulation of alveolar epithelial tight junction composition and therefore ion transport and solute permeability, potentially via downstream regulation of the actin cytoskeleton organization and beta-2-adrenergic signaling. Required for lung alveolarization and maintenance of the paracellular alveolar epithelial barrier. Acts to maintain epithelial progenitor cell proliferation and organ size, via regulation of YAP1 localization away from the nucleus and thereby restriction of YAP1 target gene transcription. Acts as a negative regulator of RANKL-induced osteoclast differentiation, potentially via relocation of TJP2/ZO-2 away from the nucleus, subsequently involved in bone resorption in response to calcium deficiency. Mediates the osteoprotective effects of estrogen, potentially via acting downstream of estrogen signaling independently of RANKL signaling pathways. Required for the formation of the gastric paracellular barrier via its role in tight junction formation, thereby involved in the response to gastric acidification. The polypeptide is Claudin-18 (Rattus norvegicus (Rat)).